The following is a 433-amino-acid chain: Enolase (433 aa).

Position 163 (Gln-163) interacts with (2R)-2-phosphoglycerate. The active-site Proton donor is Glu-205. Mg(2+) contacts are provided by Asp-241, Glu-289, and Asp-316. (2R)-2-phosphoglycerate-binding residues include Lys-341, Arg-370, Ser-371, and Lys-392. Lys-341 functions as the Proton acceptor in the catalytic mechanism.

It belongs to the enolase family. Mg(2+) serves as cofactor.

The protein resides in the cytoplasm. It is found in the secreted. The protein localises to the cell surface. It carries out the reaction (2R)-2-phosphoglycerate = phosphoenolpyruvate + H2O. Its pathway is carbohydrate degradation; glycolysis; pyruvate from D-glyceraldehyde 3-phosphate: step 4/5. Catalyzes the reversible conversion of 2-phosphoglycerate (2-PG) into phosphoenolpyruvate (PEP). It is essential for the degradation of carbohydrates via glycolysis. This is Enolase from Treponema denticola (strain ATCC 35405 / DSM 14222 / CIP 103919 / JCM 8153 / KCTC 15104).